The chain runs to 214 residues: ER lumen protein-retaining receptor 3 (214 aa).

The Lumenal segment spans residues 1-4 (MNIF). Residues 5–24 (RILGDVSHLLAIIILLLKMW) traverse the membrane as a helical segment. At 25 to 32 (KSKSCAGI) the chain is on the cytoplasmic side. Residues 33–52 (SGKSQLLFALVFTTRYLDLF) form a helical membrane-spanning segment. Residues 47–48 (RY) form an interaction with the K-D-E-L motif on target proteins region. Over 53 to 58 (TVFISP) the chain is Lumenal. Residues 59-79 (YNTVMKIIFLACAYVTVYLIY) form a helical membrane-spanning segment. Over 80 to 92 (GKLRKSYDSENDT) the chain is Cytoplasmic. Residues 93 to 110 (FRLEFLLVPVIGLSFLEN) form a helical membrane-spanning segment. Residues 111 to 116 (YEFTPL) lie on the Lumenal side of the membrane. A helical transmembrane segment spans residues 117-135 (EILWTFSIYLESVAILPQL). The Cytoplasmic segment spans residues 136–149 (FMISKTGEAESITT). Residues 150-168 (HYLFFLGLYRVLYLANWIW) traverse the membrane as a helical segment. The interval 159-169 (RVLYLANWIWR) is interaction with the K-D-E-L motif on target proteins. Over 169–178 (RYHTEKFYDQ) the chain is Lumenal. Residues 179-199 (IAVVSGVVQTIFYFDFFYLYV) form a helical membrane-spanning segment. The Cytoplasmic segment spans residues 200–214 (TKVLKGKKLSLPMPV). Positions 204–207 (KGKK) are important for recycling of cargo proteins with the sequence motif K-D-E-L from the Golgi to the endoplasmic reticulum.

Belongs to the ERD2 family.

It localises to the endoplasmic reticulum membrane. The protein resides in the golgi apparatus membrane. Its subcellular location is the cytoplasmic vesicle. The protein localises to the COPI-coated vesicle membrane. In terms of biological role, receptor for the C-terminal sequence motif K-D-E-L that is present on endoplasmic reticulum resident proteins and that mediates their recycling from the Golgi back to the endoplasmic reticulum. The chain is ER lumen protein-retaining receptor 3 (kdelr3) from Xenopus laevis (African clawed frog).